Reading from the N-terminus, the 469-residue chain is Swarming motility regulation sensor protein RssA (469 aa).

A run of 2 helical transmembrane segments spans residues 12–32 (IIFQ…WVKY) and 167–187 (VPLL…AYFS). The Histidine kinase domain maps to 245-459 (DAAHELRTPI…GFIIDLPESY (215 aa)). H248 carries the post-translational modification Phosphohistidine; by autocatalysis.

The protein resides in the cell inner membrane. The enzyme catalyses ATP + protein L-histidine = ADP + protein N-phospho-L-histidine.. Functionally, member of the two-component regulatory system RssA/RssB involved in regulation of swarming motility which has been shown to be inhibited by saturated fatty acids. RssA/RssB regulates cellular fatty acid composition, hemolysin production and cell surface topography. RssA/RssB negatively regulates the activity of SlhBA. It can also act as a negative regulator for the control of the swarming initiation. The polypeptide is Swarming motility regulation sensor protein RssA (rssA) (Serratia marcescens).